A 223-amino-acid chain; its full sequence is Cutinase 4 (223 aa).

A signal peptide spans 1–26; it reads MPLPLLPPLLLPLEALLDLALHLVDS. C60 and C133 are disulfide-bonded. The active-site Nucleophile is the S144. C187 and C194 are oxidised to a cystine. The active site involves D191. H203 (proton donor/acceptor) is an active-site residue.

It belongs to the cutinase family. The 2 disulfide bonds play a critical role in holding the catalytic residues in juxta-position; reduction of the disulfide bridges results in the complete inactivation of the enzyme.

Its subcellular location is the secreted. It catalyses the reaction cutin + H2O = cutin monomers.. Functionally, catalyzes the hydrolysis of complex carboxylic polyesters found in the cell wall of plants. Degrades cutin, a macromolecule that forms the structure of the plant cuticle. Also degrades suberin, a specialized macromolecule found in the cell wall of various plant tissues. The chain is Cutinase 4 from Emericella nidulans (strain FGSC A4 / ATCC 38163 / CBS 112.46 / NRRL 194 / M139) (Aspergillus nidulans).